Here is a 241-residue protein sequence, read N- to C-terminus: MASNSLMSCGIAAVYPSLLSSSKSKFVSAGVPLPNAGNVGRIRMAAHWMPGEPRPAYLDGSAPGDFGFDPLGLGEVPANLERYKESELIHCRWAMLAVPGILVPEALGYGNWVKAQEWAALPGGQATYLGNPVPWGTLPTILAIEFLAIAFVEHQRSMEKDPEKKKYPGGAFDPLGYSKDPKKLEELKVKEIKNGRLALLAFVGFCVQQSAYPGTGPLENLATHLADPWHNNIGDIVIPFN.

Residues 1–35 (MASNSLMSCGIAAVYPSLLSSSKSKFVSAGVPLPN) constitute a chloroplast transit peptide. A chlorophyll b-binding site is contributed by Trp48. Chlorophyll a is bound by residues Phe68, Glu87, and His90. Arg92 is a binding site for chlorophyll b. A helical transmembrane segment spans residues 93–113 (WAMLAVPGILVPEALGYGNWV). A chlorophyll a-binding site is contributed by Leu129. The chain crosses the membrane as a helical span at residues 132–152 (PVPWGTLPTILAIEFLAIAFV). Chlorophyll b is bound by residues Val133, Glu153, and Arg156. 6 residues coordinate chlorophyll a: Lys190, Glu191, Asn194, Arg196, Gln208, and His224. The helical transmembrane segment at 197–217 (LALLAFVGFCVQQSAYPGTGP) threads the bilayer.

This sequence belongs to the light-harvesting chlorophyll a/b-binding (LHC) protein family. The LHC complex consists of chlorophyll a-b binding proteins. Red-emitting heterodimer with LHCA4. Interacts with LHCA5. The cofactor is Binds at least 14 chlorophylls (8 Chl-a and 6 Chl-b) and carotenoids such as lutein and neoxanthin.. In terms of processing, photoregulated by reversible phosphorylation of its threonine residues.

It localises to the plastid. The protein localises to the chloroplast thylakoid membrane. In terms of biological role, the light-harvesting complex (LHC) functions as a light receptor, it captures and delivers excitation energy to photosystems with which it is closely associated. In Arabidopsis thaliana (Mouse-ear cress), this protein is Chlorophyll a-b binding protein 6, chloroplastic.